The following is a 155-amino-acid chain: Ribosomal RNA large subunit methyltransferase H (155 aa).

S-adenosyl-L-methionine-binding positions include L73, G104, and 123–128 (ISKMTF).

It belongs to the RNA methyltransferase RlmH family. As to quaternary structure, homodimer.

The protein localises to the cytoplasm. The catalysed reaction is pseudouridine(1915) in 23S rRNA + S-adenosyl-L-methionine = N(3)-methylpseudouridine(1915) in 23S rRNA + S-adenosyl-L-homocysteine + H(+). Functionally, specifically methylates the pseudouridine at position 1915 (m3Psi1915) in 23S rRNA. The polypeptide is Ribosomal RNA large subunit methyltransferase H (Francisella tularensis subsp. novicida (strain U112)).